The sequence spans 514 residues: Beta-secretase 2 (514 aa).

The first 20 residues, 1 to 20 (MGALLRALLLPLLAQWLLRA), serve as a signal peptide directing secretion. The propeptide occupies 21–62 (VPVLAPAPFTLPLQVAGAANHRASTVPGLGTPELPRADGLAL). Residues 21-469 (VPVLAPAPFT…NEPILWIVSY (449 aa)) lie on the Extracellular side of the membrane. The Peptidase A1 domain maps to 88-425 (YYLEMLIGTP…DRAQRRVGFA (338 aa)). Asp-106 is a catalytic residue. Asn-166 is a glycosylation site (N-linked (GlcNAc...) asparagine). 3 disulfide bridges follow: Cys-229–Cys-429, Cys-288–Cys-453, and Cys-340–Cys-389. Asp-299 is a catalytic residue. N-linked (GlcNAc...) asparagine glycosylation is present at Asn-362. The helical transmembrane segment at 470 to 490 (ALMSVCGAILLVLILLLLFPL) threads the bilayer. Residues 491–514 (HCRHAPRDPEVVNDESSLVRHRWK) lie on the Cytoplasmic side of the membrane.

It belongs to the peptidase A1 family. In terms of assembly, monomer. Interacts with RTN3 and RTN4. Undergoes autoproteolytic cleavage. In terms of processing, glycosylated.

It localises to the cell membrane. Its subcellular location is the golgi apparatus. The protein localises to the endoplasmic reticulum. It is found in the endosome. The protein resides in the melanosome. The enzyme catalyses Broad endopeptidase specificity. Cleaves Glu-Val-Asn-Leu-|-Asp-Ala-Glu-Phe in the Swedish variant of Alzheimer's amyloid precursor protein.. In terms of biological role, responsible for the proteolytic processing of the amyloid precursor protein (APP). Cleaves APP, between residues 690 and 691, leading to the generation and extracellular release of beta-cleaved soluble APP, and a corresponding cell-associated C-terminal fragment which is later released by gamma-secretase. It has also been shown that it can cleave APP between residues 671 and 672. Involved in the proteolytic shedding of PMEL at early stages of melanosome biogenesis. Cleaves PMEL within the M-beta fragment to release the amyloidogenic PMEL luminal fragment containing M-alpha and a small portion of M-beta N-terminus. This is a prerequisite step for subsequent processing and assembly of PMEL fibrils into amyloid sheets. Responsible also for the proteolytic processing of CLTRN in pancreatic beta cells. In Rattus norvegicus (Rat), this protein is Beta-secretase 2 (Bace2).